The following is a 169-amino-acid chain: Myosin regulatory light chain 11 (169 aa).

Ala2 carries the n,N,N-trimethylalanine modification. Phosphoserine occurs at positions 15 and 16. 2 positions are modified to phosphothreonine: Thr25 and Thr35. Residues 25-60 form the EF-hand 1 domain; sequence TQIQEFKEAFTVIDQNRDGIIDKEDLRDTFAAMGRL. Residues Asp38, Asn40, Asp42, and Asp49 each coordinate Ca(2+). Ser75 is subject to Phosphoserine. 2 EF-hand domains span residues 95–130 and 131–166; these read DPED…QCDR and FSQE…GDAK. Phosphothreonine is present on Thr101.

Myosin is a hexamer of 2 heavy chains and 4 light chains.

In terms of biological role, myosin regulatory subunit that plays an essential role to maintain muscle integrity during early development. Plays a role in regulation of muscle contraction. In Mus musculus (Mouse), this protein is Myosin regulatory light chain 11 (Myl11).